We begin with the raw amino-acid sequence, 338 residues long: Anthranilate phosphoribosyltransferase (338 aa).

Residues G80, 83–84 (GD), T88, 90–93 (NIST), 108–116 (KHGNRAMSS), and S120 contribute to the 5-phospho-alpha-D-ribose 1-diphosphate site. G80 serves as a coordination point for anthranilate. S92 contributes to the Mg(2+) binding site. Residue N111 coordinates anthranilate. Residue R166 coordinates anthranilate. Mg(2+) contacts are provided by D225 and E226.

It belongs to the anthranilate phosphoribosyltransferase family. In terms of assembly, homodimer. Requires Mg(2+) as cofactor.

The enzyme catalyses N-(5-phospho-beta-D-ribosyl)anthranilate + diphosphate = 5-phospho-alpha-D-ribose 1-diphosphate + anthranilate. It participates in amino-acid biosynthesis; L-tryptophan biosynthesis; L-tryptophan from chorismate: step 2/5. Functionally, catalyzes the transfer of the phosphoribosyl group of 5-phosphorylribose-1-pyrophosphate (PRPP) to anthranilate to yield N-(5'-phosphoribosyl)-anthranilate (PRA). The protein is Anthranilate phosphoribosyltransferase of Herpetosiphon aurantiacus (strain ATCC 23779 / DSM 785 / 114-95).